The primary structure comprises 805 residues: Kinesin-like protein Klp10A (805 aa).

The interval Met-1 to Val-274 is globular. 2 disordered regions span residues Gln-68–Gly-94 and Ile-117–His-211. Positions Ala-80 to Gly-94 are enriched in polar residues. Low complexity predominate over residues Ser-123–Thr-136. Ser-157 is modified (phosphoserine). The segment covering Gln-158–Asn-179 has biased composition (polar residues). The span at Pro-180–Gln-200 shows a compositional bias: low complexity. Residues Ala-205–Asp-244 adopt a coiled-coil conformation. The 333-residue stretch at Gln-278–Leu-610 folds into the Kinesin motor domain. An ATP-binding site is contributed by Gly-368–Thr-375. Thr-630 carries the phosphothreonine modification. A disordered region spans residues Glu-633–Gly-688. Residues Leu-648–Ala-664 show a composition bias toward polar residues. The span at Asn-676–Gly-688 shows a compositional bias: low complexity. Phosphoserine is present on residues Ser-795, Ser-797, and Ser-800.

The protein belongs to the TRAFAC class myosin-kinesin ATPase superfamily. Kinesin family. MCAK/KIF2 subfamily. As to quaternary structure, interacts with Alms1a (via C-terminus). In terms of tissue distribution, expressed in male germline stem cells and spermatogonia (at protein level).

The protein resides in the cytoplasm. Its subcellular location is the cytoskeleton. It is found in the microtubule organizing center. It localises to the centrosome. The protein localises to the spindle pole. The protein resides in the chromosome. Its subcellular location is the centromere. Its function is as follows. Required during anaphase to drive sister chromatid separation to promote flux by actively depolymerizing kinetochore microtubules at their pole-associated minus ends, thereby moving chromatids through a 'poleward flux'. Involved in asymmetric cell division of sensory organ precursor (SOP) cells by playing a role in the asymmetric localization of Sara-expressing endosomes to the pIIa daughter cell but not to the pIIb cell. Klp98A targets Sara-expressing endosomes to the central spindle which is symmetrically arranged in early cell division. During late cytokinesis, central spindle asymmetry is generated by enrichment of Patronin on the pIIb side which protects microtubules from depolymerization by Klp10A while unprotected microtubules on the pIIa side are disassembled by Klp10A, leading to the asymmetric delivery of Sara-expressing endosomes to the pIIa daughter cell. In Drosophila melanogaster (Fruit fly), this protein is Kinesin-like protein Klp10A.